A 546-amino-acid chain; its full sequence is Probable protein kinase UbiB (546 aa).

Residues 124 to 502 (DFSVEPLASA…HVRQGQSRYL (379 aa)) form the Protein kinase domain. ATP contacts are provided by residues 130 to 138 (LASASIAQV) and Lys153. Asp288 functions as the Proton acceptor in the catalytic mechanism. A run of 2 helical transmembrane segments spans residues 501–521 (YLFGIGAVLLLSGTLLFIHRP) and 522–542 (EWGMMPGWLMAGGVVTWLIGW).

Belongs to the ABC1 family. UbiB subfamily.

It is found in the cell inner membrane. Its pathway is cofactor biosynthesis; ubiquinone biosynthesis [regulation]. Its function is as follows. Is probably a protein kinase regulator of UbiI activity which is involved in aerobic coenzyme Q (ubiquinone) biosynthesis. In Klebsiella pneumoniae subsp. pneumoniae (strain ATCC 700721 / MGH 78578), this protein is Probable protein kinase UbiB.